Reading from the N-terminus, the 41-residue chain is Large ribosomal subunit protein bL36 (41 aa).

The protein belongs to the bacterial ribosomal protein bL36 family.

This Agrobacterium fabrum (strain C58 / ATCC 33970) (Agrobacterium tumefaciens (strain C58)) protein is Large ribosomal subunit protein bL36 (rpmJ).